The primary structure comprises 63 residues: DNA-directed RNA polymerase 7 kDa subunit (63 aa).

This sequence belongs to the poxviridae DNA-directed RNA polymerase 7 kDa subunit family. In terms of assembly, the DNA-dependent RNA polymerase used for intermediate and late genes expression consists of eight subunits 147 kDa, 133 kDa, 35 kDa, 30 kDa, 22 kDa, 19 kDa, 18 kDa and 7 kDa totalling more than 500 kDa in mass. The same holoenzyme, with the addition of the transcription-specificity factor RAP94, is used for early gene expression.

The protein resides in the virion. It carries out the reaction RNA(n) + a ribonucleoside 5'-triphosphate = RNA(n+1) + diphosphate. Functionally, part of the DNA-dependent RNA polymerase which catalyzes the transcription of viral DNA into RNA using the four ribonucleoside triphosphates as substrates. Responsible for the transcription of early, intermediate and late genes. DNA-dependent RNA polymerase associates with the early transcription factor (ETF) thereby allowing the early genes transcription. Late transcription, and probably also intermediate transcription, require newly synthesized RNA polymerase. The chain is DNA-directed RNA polymerase 7 kDa subunit (RPO7) from Myxoma virus (strain Lausanne) (MYXV).